The sequence spans 42 residues: Potassium channel toxin gamma-KTx 1.8 (42 aa).

4 disulfides stabilise this stretch: C5–C23, C11–C34, C20–C39, and C24–C41.

This sequence belongs to the ergtoxin family. Gamma-KTx 1 subfamily. In terms of tissue distribution, expressed by the venom gland.

The protein localises to the secreted. Functionally, blocks in a reversible manner human and rat Kv11.1/KCNH2/ERG1 potassium channels. Also completely and irreversibly blocks rat Kv11.2/KCNH6/ERG2 and human Kv11.3/KCNH7/ERG3 channels. Also weakly inhibits Kir2.1/KCNJ2 and Kv1.2/KCNA2 potassium channels. The protein is Potassium channel toxin gamma-KTx 1.8 of Centruroides elegans (Bark scorpion).